The following is a 60-amino-acid chain: MADENKFEQAKGNVKETVGNVTDNKELENEGKEDKTSGKAKEFVENAKDKANEVIDKFKK.

Positions 1–41 (MADENKFEQAKGNVKETVGNVTDNKELENEGKEDKTSGKAK) are disordered. Residues 23–41 (DNKELENEGKEDKTSGKAK) show a composition bias toward basic and acidic residues.

It belongs to the UPF0337 (CsbD) family.

The sequence is that of UPF0337 protein SSP1134 from Staphylococcus saprophyticus subsp. saprophyticus (strain ATCC 15305 / DSM 20229 / NCIMB 8711 / NCTC 7292 / S-41).